A 275-amino-acid chain; its full sequence is Large ribosomal subunit protein uL2 (275 aa).

A disordered region spans residues 223–275 (VAMNPVDHPHGGGEGRTGEGRVPVSPWGTPAKGYRTRNNKRTDNMIVRRRHSK). Positions 229-241 (DHPHGGGEGRTGE) are enriched in basic and acidic residues.

This sequence belongs to the universal ribosomal protein uL2 family. Part of the 50S ribosomal subunit. Forms a bridge to the 30S subunit in the 70S ribosome.

In terms of biological role, one of the primary rRNA binding proteins. Required for association of the 30S and 50S subunits to form the 70S ribosome, for tRNA binding and peptide bond formation. It has been suggested to have peptidyltransferase activity; this is somewhat controversial. Makes several contacts with the 16S rRNA in the 70S ribosome. This is Large ribosomal subunit protein uL2 from Laribacter hongkongensis (strain HLHK9).